Here is a 274-residue protein sequence, read N- to C-terminus: Histone H1.1 (274 aa).

Disordered regions lie at residues 1–63 (MSEV…SSHP) and 129–155 (PSAS…PATV). Ser-2 is modified (N-acetylserine). Low complexity predominate over residues 16–25 (TAADAPVTDA). Residues 40–49 (NVKEVKEKKT) are compositionally biased toward basic and acidic residues. The region spanning 61 to 130 (SHPTYEEMIK…KVKASFKLPS (70 aa)) is the H15 domain. Residues 129–145 (PSASAKASSPKAAAEKS) are compositionally biased toward low complexity. Residue Lys-161 forms a Glycyl lysine isopeptide (Lys-Gly) (interchain with G-Cter in ubiquitin) linkage. 2 disordered regions span residues 167–233 (ASKA…PAKK) and 249–274 (KTPV…RVKK). Composition is skewed to low complexity over residues 175–185 (AVKPKTAAAKK) and 221–233 (AAKT…PAKK).

Belongs to the histone H1/H5 family.

The protein resides in the nucleus. The protein localises to the chromosome. In terms of biological role, histones H1 are necessary for the condensation of nucleosome chains into higher-order structures. In Arabidopsis thaliana (Mouse-ear cress), this protein is Histone H1.1.